The chain runs to 529 residues: Glutamyl-tRNA reductase (529 aa).

47-50 (TCNR) is a binding site for substrate. The active-site Nucleophile is the Cys48. Positions 56–80 (SPRQQAPAPPRPGSAPPPSDEELSR) are disordered. The span at 62-73 (PAPPRPGSAPPP) shows a compositional bias: pro residues. Substrate-binding positions include Ser125, 130 to 132 (EPQ), and Gln136. NADP(+) is bound at residue 205–210 (GAGDMA). Positions 454–505 (RGAVDGPPTPRSARGAAPPASGARGGGSPRHADPRPQAAEDNGVYARQPGGR) are disordered. Positions 464 to 475 (RSARGAAPPASG) are enriched in low complexity.

This sequence belongs to the glutamyl-tRNA reductase family. In terms of assembly, homodimer.

It carries out the reaction (S)-4-amino-5-oxopentanoate + tRNA(Glu) + NADP(+) = L-glutamyl-tRNA(Glu) + NADPH + H(+). Its pathway is porphyrin-containing compound metabolism; protoporphyrin-IX biosynthesis; 5-aminolevulinate from L-glutamyl-tRNA(Glu): step 1/2. In terms of biological role, catalyzes the NADPH-dependent reduction of glutamyl-tRNA(Glu) to glutamate 1-semialdehyde (GSA). This Sorangium cellulosum (strain So ce56) (Polyangium cellulosum (strain So ce56)) protein is Glutamyl-tRNA reductase.